Consider the following 725-residue polypeptide: N-alpha-acetyltransferase 35, NatC auxiliary subunit (725 aa).

The interval 548–573 (ERIMEEQQKGRSSKKTKKKKKVRPLS) is disordered. Over residues 558-571 (RSSKKTKKKKKVRP) the composition is skewed to basic residues.

This sequence belongs to the MAK10 family. Component of the N-terminal acetyltransferase C (NatC) complex.

It is found in the cytoplasm. Auxillary component of the N-terminal acetyltransferase C (NatC) complex which catalyzes acetylation of N-terminal methionine residues. N-terminal acetylation protects proteins from ubiquitination and degradation by the N-end rule pathway. This Gallus gallus (Chicken) protein is N-alpha-acetyltransferase 35, NatC auxiliary subunit (NAA35).